A 370-amino-acid polypeptide reads, in one-letter code: Cytochrome b (370 aa).

4 consecutive transmembrane segments (helical) span residues 30–50 (FGSM…FLAF), 74–96 (WVFR…LHIF), 109–129 (VWMS…MGYV), and 175–195 (FFVL…GHLI). H80 and H94 together coordinate heme b. Residues H179 and H193 each contribute to the heme b site. H198 lines the a ubiquinone pocket. 4 consecutive transmembrane segments (helical) span residues 221–240 (YLGK…VLSL), 284–304 (VLGV…ALVN), 316–336 (FLVF…QCTV), and 342–362 (ILSP…LFIF).

Belongs to the cytochrome b family. In terms of assembly, the main subunits of complex b-c1 are: cytochrome b, cytochrome c1 and the Rieske protein. It depends on heme b as a cofactor.

It localises to the mitochondrion inner membrane. In terms of biological role, component of the ubiquinol-cytochrome c reductase complex (complex III or cytochrome b-c1 complex) that is part of the mitochondrial respiratory chain. The b-c1 complex mediates electron transfer from ubiquinol to cytochrome c. Contributes to the generation of a proton gradient across the mitochondrial membrane that is then used for ATP synthesis. This chain is Cytochrome b, found in Caenorhabditis elegans.